The sequence spans 90 residues: UPF0237 protein MMP0657 (90 aa).

The ACT domain maps to 5–79 (VITVVGVDKP…SEIGVKINVQ (75 aa)).

This sequence belongs to the UPF0237 family.

This is UPF0237 protein MMP0657 from Methanococcus maripaludis (strain DSM 14266 / JCM 13030 / NBRC 101832 / S2 / LL).